We begin with the raw amino-acid sequence, 91 residues long: Sec-independent protein translocase protein TatA (91 aa).

The helical transmembrane segment at 1 to 21 (MGSMSVWHWVIVAVVVMLLFG) threads the bilayer. Residues 42 to 91 (GMADDETQPTNTTSVPPVGPNDPVRTLPHQGAPGTAPQQTHVPAGDHKAV) form a disordered region.

Belongs to the TatA/E family. In terms of assembly, the Tat system comprises two distinct complexes: a TatABC complex, containing multiple copies of TatA, TatB and TatC subunits, and a separate TatA complex, containing only TatA subunits. Substrates initially bind to the TatABC complex, which probably triggers association of the separate TatA complex to form the active translocon.

It localises to the cell inner membrane. Part of the twin-arginine translocation (Tat) system that transports large folded proteins containing a characteristic twin-arginine motif in their signal peptide across membranes. TatA could form the protein-conducting channel of the Tat system. In Methylorubrum populi (strain ATCC BAA-705 / NCIMB 13946 / BJ001) (Methylobacterium populi), this protein is Sec-independent protein translocase protein TatA.